The sequence spans 314 residues: MATTAGEQANYLQSADSMSDGRQHHPEEAGEKKQEEQKKSWGEWLQDLKIFIWNPEKKEVLGRDKKSWALILLFYFILYCFLAGLFALCIYGLLATISPYVPTYRDRVFPPGLTIRPQFNALYFSFNPSDRSTWSSHAESLNTFLEDYNDEIQQEKNLECTPGKYFFQPGEDHEERKACQFRRSLLKNCSGIEDPTFGFAQGKPCILLKMNRIVGYQAGSGIPIYVTCEILKADASYLGPVNFYPSDKFDLMYYPYYGKLTHVNYTSPLIAMQFTEVKNNQDINIQCKINGKDIISDHDKDRFLGRVAFTLHIG.

Residues 1 to 17 (MATTAGEQANYLQSADS) show a composition bias toward polar residues. The interval 1 to 37 (MATTAGEQANYLQSADSMSDGRQHHPEEAGEKKQEEQ) is disordered. Over 1-69 (MATTAGEQAN…VLGRDKKSWA (69 aa)) the chain is Cytoplasmic. Basic and acidic residues predominate over residues 19 to 37 (SDGRQHHPEEAGEKKQEEQ). The helical transmembrane segment at 70–90 (LILLFYFILYCFLAGLFALCI) threads the bilayer. Over 91-314 (YGLLATISPY…GRVAFTLHIG (224 aa)) the chain is Extracellular. A disulfide bridge connects residues cysteine 160 and cysteine 179. A glycan (N-linked (GlcNAc...) asparagine) is linked at asparagine 188. 2 disulfides stabilise this stretch: cysteine 189–cysteine 205 and cysteine 228–cysteine 287. An N-linked (GlcNAc...) asparagine glycan is attached at asparagine 264.

It belongs to the X(+)/potassium ATPases subunit beta family. As to quaternary structure, composed of two subunits: alpha (catalytic) and beta (accessory). Post-translationally, glycosylated. In terms of tissue distribution, expressed in skeletal muscle, liver, lung, kidney, heart, brain and skin.

Its subcellular location is the membrane. Functionally, this is the non-catalytic component of the active enzyme, which catalyzes the hydrolysis of ATP coupled with the exchange of Na(+) and K(+) ions across the plasma membrane. This Xenopus laevis (African clawed frog) protein is Protein ATP1B4 (atp1b4).